The chain runs to 221 residues: MSANDKQYISYNNVHQLCQVSAERIKNFKPDLIIAIGGGGFIPARILRTFLKEPGVPTIRIFAIILSLYEDLNSVGSEVEEVGVKVSRTQWIDYEQCKLDLVGKNVLIVDEVDDTRTTLHYALSELEKDAAEQAKAKGIDTEKSPEMKTNFGIFVLHDKQKPKKADLPAEMLNDKNRYFAAKTVPDKWYAYPWESTDIVFHTRMAIEQGNDIFIPEQEHKQ.

S2 is modified (N-acetylserine). GMP contacts are provided by residues K85, 110–118 (DEVDDTRTT), K159, and 188–194 (WYAYPWE). Catalysis depends on D114, which acts as the Proton acceptor.

Belongs to the purine/pyrimidine phosphoribosyltransferase family. As to quaternary structure, dimer. Mg(2+) is required as a cofactor.

It is found in the cytoplasm. Its subcellular location is the nucleus. It carries out the reaction IMP + diphosphate = hypoxanthine + 5-phospho-alpha-D-ribose 1-diphosphate. It catalyses the reaction GMP + diphosphate = guanine + 5-phospho-alpha-D-ribose 1-diphosphate. The protein operates within purine metabolism; IMP biosynthesis via salvage pathway; IMP from hypoxanthine: step 1/1. With respect to regulation, subject to feedback inhibition by GMP. Converts guanine to guanosine monophosphate, and hypoxanthine to inosine monophosphate. Transfers the 5-phosphoribosyl group from 5-phosphoribosylpyrophosphate onto the purine. Plays a central role in the generation of purine nucleotides through the purine salvage pathway. The protein is Hypoxanthine-guanine phosphoribosyltransferase (HPT1) of Saccharomyces cerevisiae (strain ATCC 204508 / S288c) (Baker's yeast).